We begin with the raw amino-acid sequence, 206 residues long: Small ribosomal subunit protein uS4 (206 aa).

The region spanning 96-156 is the S4 RNA-binding domain; sequence GRLDNVVYRM…EKAKKQARIK (61 aa).

Belongs to the universal ribosomal protein uS4 family. As to quaternary structure, part of the 30S ribosomal subunit. Contacts protein S5. The interaction surface between S4 and S5 is involved in control of translational fidelity.

One of the primary rRNA binding proteins, it binds directly to 16S rRNA where it nucleates assembly of the body of the 30S subunit. In terms of biological role, with S5 and S12 plays an important role in translational accuracy. This chain is Small ribosomal subunit protein uS4, found in Tolumonas auensis (strain DSM 9187 / NBRC 110442 / TA 4).